We begin with the raw amino-acid sequence, 441 residues long: Ribosomal protein uS12 methylthiotransferase RimO (441 aa).

The 111-residue stretch at 7 to 117 (PKISFVSLGC…VLEAVHRALP (111 aa)) folds into the MTTase N-terminal domain. [4Fe-4S] cluster contacts are provided by C16, C52, C81, C148, C152, and C155. One can recognise a Radical SAM core domain in the interval 134-371 (LTPRHYAYLK…MARQQKISAR (238 aa)). One can recognise a TRAM domain in the interval 374 to 440 (KRKVGTRQQV…AYDLHGTVAG (67 aa)).

The protein belongs to the methylthiotransferase family. RimO subfamily. It depends on [4Fe-4S] cluster as a cofactor.

It localises to the cytoplasm. The enzyme catalyses L-aspartate(89)-[ribosomal protein uS12]-hydrogen + (sulfur carrier)-SH + AH2 + 2 S-adenosyl-L-methionine = 3-methylsulfanyl-L-aspartate(89)-[ribosomal protein uS12]-hydrogen + (sulfur carrier)-H + 5'-deoxyadenosine + L-methionine + A + S-adenosyl-L-homocysteine + 2 H(+). Functionally, catalyzes the methylthiolation of an aspartic acid residue of ribosomal protein uS12. This Rhodopseudomonas palustris (strain BisA53) protein is Ribosomal protein uS12 methylthiotransferase RimO.